The sequence spans 247 residues: Carboxy-S-adenosyl-L-methionine synthase (247 aa).

S-adenosyl-L-methionine contacts are provided by residues Tyr-40, 65–67 (GAS), 90–91 (DN), 122–123 (DI), Asn-137, and Arg-204.

This sequence belongs to the class I-like SAM-binding methyltransferase superfamily. Cx-SAM synthase family. Homodimer.

The enzyme catalyses prephenate + S-adenosyl-L-methionine = carboxy-S-adenosyl-L-methionine + 3-phenylpyruvate + H2O. Functionally, catalyzes the conversion of S-adenosyl-L-methionine (SAM) to carboxy-S-adenosyl-L-methionine (Cx-SAM). This is Carboxy-S-adenosyl-L-methionine synthase from Pseudomonas putida (strain GB-1).